The sequence spans 629 residues: Proteoglycan Cow (629 aa).

Residues 1-27 (MKHSPLIASACLALVLMSSSLIGSTEA) form the signal peptide. Disordered regions lie at residues 118–186 (KRRV…ESKE) and 198–223 (GDKQQQQQQLSQPAAGPSVIQQDDDE). Residues 128–143 (DSQDAEDINNDDEDNS) show a composition bias toward acidic residues. Asn-142 carries an N-linked (GlcNAc...) asparagine glycan. Residues 144 to 159 (SDGGSSNSSPTGTNNA) show a composition bias toward low complexity. Residues 167–186 (EETDDEDKSLSLGDDDESKE) are compositionally biased toward acidic residues. Positions 222 to 273 (DEELDNCKPCPVAKPTFLCGADNRTYSSLCRLDYHNCIHSTSIRIACKGFCP) constitute a Kazal-like domain. 3 disulfide bridges follow: Cys-228-Cys-258, Cys-231-Cys-251, and Cys-240-Cys-272. N-linked (GlcNAc...) asparagine glycosylation is present at Asn-244. The tract at residues 298–356 (SLDQQQQQQQQQQQQQQQQQAYKDSNNNNIMMNSGNIMGGNNNDFNTIMNDKEDNNRHN) is disordered. The span at 301–340 (QQQQQQQQQQQQQQQQQAYKDSNNNNIMMNSGNIMGGNNN) shows a compositional bias: low complexity. EF-hand domains are found at residues 468-503 (ACKTEAKWMFGHLDLNNDGQLSLQEMYDLEHDQNER) and 508-535 (FIDTCDLDTDSSINTREWCRCFEKTDRP). Positions 481, 483, 485, 487, and 492 each coordinate Ca(2+). A Thyroglobulin type-1 domain is found at 533 to 594 (DRPCAAVRRR…NTRTRGKPNC (62 aa)). 3 disulfides stabilise this stretch: Cys-536-Cys-555, Cys-566-Cys-573, and Cys-575-Cys-594. Residues 602–629 (ASLTSDDEDEGADDEDSAEGSADQMLVF) are disordered. Residues 606–619 (SDDEDEGADDEDSA) are compositionally biased toward acidic residues. The segment covering 620 to 629 (EGSADQMLVF) has biased composition (low complexity).

Interacts (in heparan sulfate-bound form) with wg. Post-translationally, contains heparan sulfate O-linked oligosaccharides. In the wing disk, detected throughout the disk where it is localized primarily to the apical surface but is also present at the basal surface (at protein level).

It is found in the secreted. In terms of biological role, binds to the Wnt signaling protein wg, stabilizes it and promotes its extracellular distribution. This is required for establishment of a wg gradient during development to allow for regulation of target genes at different levels. The sequence is that of Proteoglycan Cow from Drosophila melanogaster (Fruit fly).